The primary structure comprises 156 residues: Crossover junction endodeoxyribonuclease RuvC (156 aa).

Active-site residues include D7, E66, and D138. Mg(2+)-binding residues include D7, E66, and D138.

This sequence belongs to the RuvC family. As to quaternary structure, homodimer which binds Holliday junction (HJ) DNA. The HJ becomes 2-fold symmetrical on binding to RuvC with unstacked arms; it has a different conformation from HJ DNA in complex with RuvA. In the full resolvosome a probable DNA-RuvA(4)-RuvB(12)-RuvC(2) complex forms which resolves the HJ. It depends on Mg(2+) as a cofactor.

It is found in the cytoplasm. The enzyme catalyses Endonucleolytic cleavage at a junction such as a reciprocal single-stranded crossover between two homologous DNA duplexes (Holliday junction).. Functionally, the RuvA-RuvB-RuvC complex processes Holliday junction (HJ) DNA during genetic recombination and DNA repair. Endonuclease that resolves HJ intermediates. Cleaves cruciform DNA by making single-stranded nicks across the HJ at symmetrical positions within the homologous arms, yielding a 5'-phosphate and a 3'-hydroxyl group; requires a central core of homology in the junction. The consensus cleavage sequence is 5'-(A/T)TT(C/G)-3'. Cleavage occurs on the 3'-side of the TT dinucleotide at the point of strand exchange. HJ branch migration catalyzed by RuvA-RuvB allows RuvC to scan DNA until it finds its consensus sequence, where it cleaves and resolves the cruciform DNA. This is Crossover junction endodeoxyribonuclease RuvC from Ehrlichia chaffeensis (strain ATCC CRL-10679 / Arkansas).